A 319-amino-acid polypeptide reads, in one-letter code: tRNA-cytidine(32) 2-sulfurtransferase (319 aa).

Residues S45–S50 carry the PP-loop motif motif. [4Fe-4S] cluster contacts are provided by C120, C123, and C211.

The protein belongs to the TtcA family. As to quaternary structure, homodimer. Requires Mg(2+) as cofactor. The cofactor is [4Fe-4S] cluster.

The protein localises to the cytoplasm. It carries out the reaction cytidine(32) in tRNA + S-sulfanyl-L-cysteinyl-[cysteine desulfurase] + AH2 + ATP = 2-thiocytidine(32) in tRNA + L-cysteinyl-[cysteine desulfurase] + A + AMP + diphosphate + H(+). The protein operates within tRNA modification. Its function is as follows. Catalyzes the ATP-dependent 2-thiolation of cytidine in position 32 of tRNA, to form 2-thiocytidine (s(2)C32). The sulfur atoms are provided by the cysteine/cysteine desulfurase (IscS) system. The chain is tRNA-cytidine(32) 2-sulfurtransferase from Shewanella woodyi (strain ATCC 51908 / MS32).